Reading from the N-terminus, the 355-residue chain is Peptide chain release factor 1 (355 aa).

Q233 is modified (N5-methylglutamine). Positions 280-293 are enriched in basic and acidic residues; the sequence is ERRKKEQERADSRR. A disordered region spans residues 280 to 308; the sequence is ERRKKEQERADSRRGQVGSGDRSERIRTY.

This sequence belongs to the prokaryotic/mitochondrial release factor family. Methylated by PrmC. Methylation increases the termination efficiency of RF1.

Its subcellular location is the cytoplasm. Its function is as follows. Peptide chain release factor 1 directs the termination of translation in response to the peptide chain termination codons UAG and UAA. This is Peptide chain release factor 1 from Rickettsia peacockii (strain Rustic).